Reading from the N-terminus, the 133-residue chain is DNA-directed RNA polymerases I and III subunit RPAC2 (133 aa).

Position 1 is an N-acetylmethionine (Met1). The segment at 1 to 22 (MEEDQELERKMSGVKTSMAEGE) is disordered.

It belongs to the archaeal Rpo11/eukaryotic RPB11/RPC19 RNA polymerase subunit family. Component of the RNA polymerase I and RNA polymerase III complexes consisting of at least 13 and 17 subunits, respectively. The transcriptionally active RNA polymerase III complex consists of a ten-subunit horseshoe-shaped catalytic core composed of POLR3A/RPC1, POLR3B/RPC2, POLR1C/RPAC1, POLR1D/RPAC2, POLR3K/RPC10, POLR2E/RPABC1, POLR2F/RPABC2, POLR2H/RPABC3, POLR2K/RPABC4 and POLR2L/RPABC5; a mobile stalk composed of two subunits POLR3H/RPC8 and CRCP/RPC9, protruding from the core and functioning primarily in transcription initiation; and additional subunits homologous to general transcription factors of the RNA polymerase II machinery, POLR3C/RPC3-POLR3F/RPC6-POLR3G/RPC7 heterotrimer required for transcription initiation and POLR3D/RPC4-POLR3E/RPC5 heterodimer involved in both transcription initiation and termination.

Its subcellular location is the nucleus. Its function is as follows. DNA-dependent RNA polymerase catalyzes the transcription of DNA into RNA using the four ribonucleoside triphosphates as substrates. Common component of RNA polymerases I and III which synthesize ribosomal RNA precursor pre-rRNA and short non-coding RNAs including 5S rRNA, snRNAs, tRNAs and miRNAs, respectively. The chain is DNA-directed RNA polymerases I and III subunit RPAC2 (POLR1D) from Bos taurus (Bovine).